The primary structure comprises 137 residues: Cellular retinoic acid-binding protein 1 (137 aa).

Residues 21–31 carry the Nuclear localization signal motif; the sequence is RALGVNAMLRK. An all-trans-retinoate-binding site is contributed by 132 to 134; sequence RIY.

The protein belongs to the calycin superfamily. Fatty-acid binding protein (FABP) family.

It localises to the cytoplasm. Functionally, cytosolic CRABPs may regulate the access of retinoic acid to the nuclear retinoic acid receptors. This Pelodiscus sinensis (Chinese softshell turtle) protein is Cellular retinoic acid-binding protein 1 (CRABP1).